Here is a 694-residue protein sequence, read N- to C-terminus: Beta-mannosyltransferase 8 (694 aa).

At 1–11 (MKFPKLRKRTV) the chain is on the cytoplasmic side. A helical membrane pass occupies residues 12–29 (YWAVLTVFALFTIHFVFQ). Topologically, residues 30 to 694 (YKEHNSHRVQ…YLYDHASVNS (665 aa)) are extracellular. 2 N-linked (GlcNAc...) asparagine glycosylation sites follow: Asn101 and Asn542.

It belongs to the BMT family.

It localises to the membrane. Its function is as follows. Beta-mannosyltransferase involved in cell wall biosynthesis through beta-1,2-mannosylation of cell wall phosphopeptidomannan. Plays a role in the ability to produce hyphae in the presence of three bacterial species. This Candida albicans (strain SC5314 / ATCC MYA-2876) (Yeast) protein is Beta-mannosyltransferase 8 (BMT8).